Here is a 554-residue protein sequence, read N- to C-terminus: MASPPAHRSSKAADEELPKASSTFHPSLWGSFFLTYQPPTAPQRANMKERAEVLRERVRKVLKGSTTDQLPETVNLILTLQRLGLGYYYENEIDKLLHQIYSNSDYNVKDLNLVSQRFYLLRKNGYDVPSDVFLSFKTEEGGFACAAADTRSLLSLYNAAYLWKHGEEVLDEAISSTRLRLQDLLGRLLPESPFAKEVSSSLRTPLFRRVGILEARNYIPIYETEATRNEAVLELAKLNFNLQQLDFCEELKHCSAWWNEMIAKSKLTFVRDRIVEEYFWMNGACYDPPYSLSRIILTKITGLITIIDDMFDTHGTTEDCMKFAEAFGRWDESAIHLLPEYMKDFYILMLETFQSFEDALGPEKSYRVLYLKQAMERLVELYTKEIKWRDEDYVATMSEHLKVSAESIGANALTCSAYAGMGDMSITKETFEWALSFPQFIRTFGSFVRLSNDVESTKREQTKDHSPSTVHCYMKEHGITMDDACEKIKELIEDSWKDMLEQSLALKGLPKVVPQLVFDFSRTTDNMYRDRDALTSSEALKEMIQLLFVEPIPE.

Asp-308 and Asp-312 together coordinate Mg(2+). Residues Asp-308, Asp-312, Arg-449, and Asn-452 each coordinate substrate. The DDXXD motif motif lies at 308–312; that stretch reads DDMFD. Positions 452, 456, and 460 each coordinate Mg(2+).

The protein belongs to the terpene synthase family. Monomer. Mg(2+) serves as cofactor. Requires Mn(2+) as cofactor.

It is found in the cytoplasm. It functions in the pathway secondary metabolite biosynthesis; terpenoid biosynthesis. Its function is as follows. Non-functional sesquiterpene synthase having less than 1% of the activity found in cv. Delprim. The polypeptide is Inactive sesquithujene synthase (Zea mays (Maize)).